Consider the following 249-residue polypeptide: DNA polymerase sliding clamp (249 aa).

The protein belongs to the PCNA family. In terms of assembly, homotrimer. The subunits circularize to form a toroid; DNA passes through its center. Replication factor C (RFC) is required to load the toroid on the DNA.

Sliding clamp subunit that acts as a moving platform for DNA processing. Responsible for tethering the catalytic subunit of DNA polymerase and other proteins to DNA during high-speed replication. This chain is DNA polymerase sliding clamp, found in Thermococcus sibiricus (strain DSM 12597 / MM 739).